We begin with the raw amino-acid sequence, 1023 residues long: 2-oxoglutarate dehydrogenase complex component E1 (1023 aa).

The transit peptide at 1-40 (MFHLRTCAAKLRPLTASQTVKTFSQNRPAAARTFQQIRCY) directs the protein to the mitochondrion. Position 74 is an N6-succinyllysine (K74). The residue at position 100 (S100) is a Phosphoserine. Ca(2+)-binding residues include H143, D156, and D158. Thiamine diphosphate is bound at residue R312. The residue at position 401 (K401) is an N6-acetyllysine. Positions 411, 444, and 446 each coordinate thiamine diphosphate. Mg(2+)-binding residues include D411, N444, and I446. A Glycyl lysine isopeptide (Lys-Gly) (interchain with G-Cter in ubiquitin) cross-link involves residue K534. An N6-succinyllysine modification is found at K564. Residue Q676 coordinates thiamine diphosphate. An N6-acetyllysine modification is found at K970.

Belongs to the alpha-ketoglutarate dehydrogenase family. Homodimer. The 2-oxoglutarate dehydrogenase complex is composed of OGDH (2-oxoglutarate dehydrogenase; E1), DLST (dihydrolipoamide succinyltransferase; E2), DLD (dihydrolipoamide dehydrogenase; E3) and the assembly factor KGD4. It contains multiple copies of the three enzymatic components (E1, E2 and E3). In the nucleus, the 2-oxoglutarate dehydrogenase complex associates with KAT2A. Interacts with ABHD11; this interaction maintains the functional lipoylation of the 2-oxoglutarate dehydrogenase complex. It depends on thiamine diphosphate as a cofactor. Requires Mg(2+) as cofactor.

The protein localises to the mitochondrion. Its subcellular location is the nucleus. It catalyses the reaction N(6)-[(R)-lipoyl]-L-lysyl-[protein] + 2-oxoglutarate + H(+) = N(6)-[(R)-S(8)-succinyldihydrolipoyl]-L-lysyl-[protein] + CO2. Its activity is regulated as follows. Calcium ions and ADP stimulate, whereas ATP and NADH reduce catalytic activity. 2-oxoglutarate dehydrogenase (E1o) component of the 2-oxoglutarate dehydrogenase complex (OGDHC). Participates in the first step, rate limiting for the overall conversion of 2-oxoglutarate to succinyl-CoA and CO(2) catalyzed by the whole OGDHC. Catalyzes the irreversible decarboxylation of 2-oxoglutarate (alpha-ketoglutarate) via the thiamine diphosphate (ThDP) cofactor and subsequent transfer of the decarboxylated acyl intermediate on an oxidized dihydrolipoyl group that is covalently amidated to the E2 enzyme (dihydrolipoyllysine-residue succinyltransferase or DLST). Plays a key role in the Krebs (citric acid) cycle, which is a common pathway for oxidation of fuel molecules, including carbohydrates, fatty acids, and amino acids. Can catalyze the decarboxylation of 2-oxoadipate in vitro, but at a much lower rate than 2-oxoglutarate. Mainly active in the mitochondrion. A fraction of the 2-oxoglutarate dehydrogenase complex also localizes in the nucleus and is required for lysine succinylation of histones: associates with KAT2A on chromatin and provides succinyl-CoA to histone succinyltransferase KAT2A. The polypeptide is 2-oxoglutarate dehydrogenase complex component E1 (Pongo abelii (Sumatran orangutan)).